The following is a 65-amino-acid chain: Large ribosomal subunit protein uL29 (65 aa).

The protein belongs to the universal ribosomal protein uL29 family.

The chain is Large ribosomal subunit protein uL29 from Parabacteroides distasonis (strain ATCC 8503 / DSM 20701 / CIP 104284 / JCM 5825 / NCTC 11152).